Reading from the N-terminus, the 300-residue chain is Meiosis-specific cyclin crs1 (300 aa).

The Cyclin N-terminal domain occupies 61–183; the sequence is IIEQEKKGLT…VLALLNFDIY (123 aa).

It belongs to the cyclin family. Cyclin AB subfamily.

The protein localises to the cytoplasm. It is found in the nucleus. Functionally, has a role in meiotic chromosome segregation. This is Meiosis-specific cyclin crs1 (crs1) from Schizosaccharomyces pombe (strain 972 / ATCC 24843) (Fission yeast).